The sequence spans 63 residues: Cecropin-1 (63 aa).

An N-terminal signal peptide occupies residues methionine 1–threonine 21. Positions glutamate 22 to alanine 23 are excised as a propeptide. At arginine 62 the chain carries Arginine amide.

This sequence belongs to the cecropin family.

It is found in the secreted. Its function is as follows. Cecropins have lytic and antibacterial activity against several Gram-positive and Gram-negative bacteria. The sequence is that of Cecropin-1 (CEC1) from Ceratitis capitata (Mediterranean fruit fly).